The following is a 705-amino-acid chain: Probable cyclic nucleotide-gated ion channel 16 (705 aa).

At 1–57 (MSNLHLYTSARFRNFPTTFSLRHHHNDPNNQRRRSIFSKLRDKTLDPGGDLITRWNH) the chain is on the cytoplasmic side. The helical transmembrane segment at 58–78 (IFLITCLLALFLDPLYFYLPI) threads the bilayer. At 79 to 91 (VQAGTACMSIDVR) the chain is on the extracellular side. A helical transmembrane segment spans residues 92–112 (FGIFVTCFRNLADLSFLIHIL). Residues 113 to 147 (LKFKTAFVSKSSRVFGRGELVMDRREIAIRYLKSE) are Cytoplasmic-facing. Residues 148–168 (FVIDLAATLPLPQIMIWFVIP) traverse the membrane as a helical segment. Topologically, residues 169–180 (NAGEFRYAAHQN) are extracellular. A helical membrane pass occupies residues 181 to 201 (HTLSLIVLIQYVPRFLVMLPL). Topologically, residues 202 to 222 (NRRIIKATGVAAKTAWSGAAY) are cytoplasmic. A helical transmembrane segment spans residues 223–243 (NLILYLLVSHVLGSVWYVLSI). Over 244–353 (QRQHECWRRE…LAASTLSSET (110 aa)) the chain is Extracellular. A helical transmembrane segment spans residues 354–374 (IFSCFICVAGLVFFSHLIGNV). Residues 375 to 705 (QNYLQSTTAR…MFKPEDPGFF (331 aa)) are Cytoplasmic-facing. Residues 457–580 (FFAQ…HSKK) and glutamate 528 contribute to the a nucleoside 3',5'-cyclic phosphate site. Residues 573 to 588 (FRRLHSKKLQHAFRYY) form a calmodulin-binding region. The region spanning 593–622 (RAWGTCFIQAAWRRYMKRKLAMELARQEEE) is the IQ domain. 2 disordered regions span residues 636-655 (EEDM…SNNQ) and 672-705 (RGVL…PGFF). Residues 642–655 (SNNNNGDENSSNNQ) show a composition bias toward low complexity.

It belongs to the cyclic nucleotide-gated cation channel (TC 1.A.1.5) family. In terms of assembly, homotetramer or heterotetramer.

It localises to the cell membrane. In terms of biological role, putative cyclic nucleotide-gated ion channel. In Arabidopsis thaliana (Mouse-ear cress), this protein is Probable cyclic nucleotide-gated ion channel 16 (CNGC16).